The following is a 440-amino-acid chain: MSEFSQTVPELVAWARKNDFSISLPVDRLSFLLAVATLNGERLDGEMSEGELVDAFRHVSDAFEQTSETIGVRANNAINDMVRQRLLNRFTSEQAEGNAIYRLTPLGIGITDYYIRQREFSTLRLSMQLSIVAGELKRAADAAAEGGDEFHWHRNVYAPLKYSVAEIFDSIDLTQRIMDEQQQQVKDDIAQLLNKDWRAAISSCELLLSETSGTLRELQDTLEAAGDKLQANLLRIQDATMTHDDLHFVDRLVFDLQSKLDRIISWGQQSIDLWIGYDRHVHKFIRTAIDMDKNRVFAQRLRQSVQTYFDDPWALTYTNADRLLDMRDEEMALRDDEVTGELPPDLEYEEFNEIREQLAAIIEEQLAIYKTRQTPLDLGLVVREYLAQYPRARHFDVARIVIDQAVRLGVAQADFTGLPAKWQPINDYGAKVQAHVIDKY.

The interval 208–236 (LSETSGTLRELQDTLEAAGDKLQANLLRI) is leucine-zipper.

This sequence belongs to the MukF family. As to quaternary structure, interacts, and probably forms a ternary complex, with MukE and MukB via its C-terminal region. The complex formation is stimulated by calcium or magnesium. It is required for an interaction between MukE and MukB.

It is found in the cytoplasm. The protein localises to the nucleoid. In terms of biological role, involved in chromosome condensation, segregation and cell cycle progression. May participate in facilitating chromosome segregation by condensation DNA from both sides of a centrally located replisome during cell division. Not required for mini-F plasmid partitioning. Probably acts via its interaction with MukB and MukE. Overexpression results in anucleate cells. It has a calcium binding activity. The sequence is that of Chromosome partition protein MukF from Salmonella paratyphi B (strain ATCC BAA-1250 / SPB7).